The following is a 185-amino-acid chain: Photosystem I assembly protein Ycf4 (185 aa).

The next 2 helical transmembrane spans lie at 21–43 (NFFWACILFLGSLGFLSVGISSY) and 63–85 (GVVMSFYGIAGLFISSYLWCTIL).

It belongs to the Ycf4 family.

It localises to the plastid. The protein localises to the chloroplast thylakoid membrane. Seems to be required for the assembly of the photosystem I complex. In Aegilops crassa (Persian goatgrass), this protein is Photosystem I assembly protein Ycf4.